A 376-amino-acid polypeptide reads, in one-letter code: Salivary hyaluronidase (376 aa).

An N-terminal signal peptide occupies residues Met-1 to Cys-16. Disulfide bonds link Cys-32-Cys-328 and Cys-203-Cys-217. Residues Asn-36, Asn-55, Asn-77, and Asn-88 are each glycosylated (N-linked (GlcNAc...) asparagine). Residue Glu-118 is the Proton donor of the active site. Asn-143, Asn-153, Asn-181, Asn-214, Asn-226, Asn-248, Asn-287, Asn-321, Asn-336, Asn-356, and Asn-371 each carry an N-linked (GlcNAc...) asparagine glycan.

This sequence belongs to the glycosyl hydrolase 56 family. In terms of processing, glycosylated; glycosylation is critical for enzymatic activity. As to expression, female salivary gland (at protein level).

The protein localises to the secreted. It carries out the reaction Random hydrolysis of (1-&gt;4)-linkages between N-acetyl-beta-D-glucosamine and D-glucuronate residues in hyaluronate.. Its function is as follows. Hydrolyzes high molecular weight hyaluronic acid to produce small oligosaccharides. Up-regulates expression of CSF2, CSF3, LIF, CXCL1, CXCL2 and CXCL8 in cultured human dermal microvascular endothelial cells. Promotes host neutrophil recruitment at the injection site. (Microbial infection) Probably promotes Leishmania major infection in the host. The sequence is that of Salivary hyaluronidase from Lutzomyia longipalpis (Sand fly).